Reading from the N-terminus, the 760-residue chain is Amyloid beta precursor protein binding family B member 2 (760 aa).

Phosphoserine occurs at positions 123 and 160. Disordered regions lie at residues 177–295 and 324–351; these read QNLG…LPPG and PADLHGSRKGSLSSVTPSPTPENEKQPW. 2 stretches are compositionally biased toward polar residues: residues 212–230 and 261–275; these read NKPQSSPEDGQVATVSSSP and SWTTLSQDSASPSSP. Residues 290-322 form the WW domain; the sequence is PDLPPGWKRVNDIAGTYYWHIPTGTTQWERPVS. A phosphoserine mark is found at serine 334, serine 409, and serine 412. PID domains lie at 413-580 and 586-738; these read DPEA…LQVD and TELV…VTTN.

Interacts (via C-terminus) with APP (via C-terminus). Interacts with APLP2 (via cytoplasmic domain). In terms of tissue distribution, expressed in the brain, retinal lens and muscle cells (at protein level).

The protein resides in the endoplasmic reticulum. The protein localises to the golgi apparatus. It is found in the early endosome. Plays a role in the maintenance of lens transparency, and may also play a role in muscle cell strength. Involved in hippocampal neurite branching and neuromuscular junction formation, as a result plays a role in spatial memory functioning. Activates transcription of APP. In Mus musculus (Mouse), this protein is Amyloid beta precursor protein binding family B member 2.